The following is a 348-amino-acid chain: Dihydroorotase (348 aa).

Zn(2+) is bound by residues histidine 17 and histidine 19. Substrate is bound by residues 19–21 and asparagine 45; that span reads HLR. 3 residues coordinate Zn(2+): lysine 103, histidine 140, and histidine 178. The residue at position 103 (lysine 103) is an N6-carboxylysine. Histidine 140 contacts substrate. Substrate is bound at residue leucine 223. Aspartate 251 is a binding site for Zn(2+). Residue aspartate 251 is part of the active site. Residues histidine 255 and alanine 267 each coordinate substrate.

Belongs to the metallo-dependent hydrolases superfamily. DHOase family. Class II DHOase subfamily. As to quaternary structure, homodimer. Zn(2+) is required as a cofactor.

It catalyses the reaction (S)-dihydroorotate + H2O = N-carbamoyl-L-aspartate + H(+). Its pathway is pyrimidine metabolism; UMP biosynthesis via de novo pathway; (S)-dihydroorotate from bicarbonate: step 3/3. Catalyzes the reversible cyclization of carbamoyl aspartate to dihydroorotate. This chain is Dihydroorotase, found in Yersinia pseudotuberculosis serotype I (strain IP32953).